The chain runs to 333 residues: Holliday junction branch migration complex subunit RuvB (333 aa).

The tract at residues 1–182 (MDERLLSQSH…FGVTLKLEYY (182 aa)) is large ATPase domain (RuvB-L). ATP is bound by residues Leu21, Arg22, Gly63, Lys66, Thr67, Thr68, 129 to 131 (EDY), Arg172, Tyr182, and Arg219. A Mg(2+)-binding site is contributed by Thr67. The tract at residues 183 to 253 (ETHELAAIVS…LASDALDRLH (71 aa)) is small ATPAse domain (RuvB-S). The head domain (RuvB-H) stretch occupies residues 256–333 (ALGLDEVDHR…SHFGYEEEEE (78 aa)). Residues Arg311 and Arg316 each coordinate DNA.

This sequence belongs to the RuvB family. In terms of assembly, homohexamer. Forms an RuvA(8)-RuvB(12)-Holliday junction (HJ) complex. HJ DNA is sandwiched between 2 RuvA tetramers; dsDNA enters through RuvA and exits via RuvB. An RuvB hexamer assembles on each DNA strand where it exits the tetramer. Each RuvB hexamer is contacted by two RuvA subunits (via domain III) on 2 adjacent RuvB subunits; this complex drives branch migration. In the full resolvosome a probable DNA-RuvA(4)-RuvB(12)-RuvC(2) complex forms which resolves the HJ.

Its subcellular location is the cytoplasm. It carries out the reaction ATP + H2O = ADP + phosphate + H(+). In terms of biological role, the RuvA-RuvB-RuvC complex processes Holliday junction (HJ) DNA during genetic recombination and DNA repair, while the RuvA-RuvB complex plays an important role in the rescue of blocked DNA replication forks via replication fork reversal (RFR). RuvA specifically binds to HJ cruciform DNA, conferring on it an open structure. The RuvB hexamer acts as an ATP-dependent pump, pulling dsDNA into and through the RuvAB complex. RuvB forms 2 homohexamers on either side of HJ DNA bound by 1 or 2 RuvA tetramers; 4 subunits per hexamer contact DNA at a time. Coordinated motions by a converter formed by DNA-disengaged RuvB subunits stimulates ATP hydrolysis and nucleotide exchange. Immobilization of the converter enables RuvB to convert the ATP-contained energy into a lever motion, pulling 2 nucleotides of DNA out of the RuvA tetramer per ATP hydrolyzed, thus driving DNA branch migration. The RuvB motors rotate together with the DNA substrate, which together with the progressing nucleotide cycle form the mechanistic basis for DNA recombination by continuous HJ branch migration. Branch migration allows RuvC to scan DNA until it finds its consensus sequence, where it cleaves and resolves cruciform DNA. This chain is Holliday junction branch migration complex subunit RuvB, found in Exiguobacterium sp. (strain ATCC BAA-1283 / AT1b).